The sequence spans 422 residues: Probable protease eep (422 aa).

His18 lines the Zn(2+) pocket. Residue Glu19 is part of the active site. His22 lines the Zn(2+) pocket. 3 consecutive transmembrane segments (helical) span residues 176–196, 349–369, and 394–414; these read FAGP…AVFL, VVFL…LPIP, and EGII…LVTW. The PDZ domain maps to 179-273; that stretch reads PMNNFILGFI…EEQLTVTPEK (95 aa).

It belongs to the peptidase M50B family. The cofactor is Zn(2+).

It localises to the cell membrane. Functionally, involved in production of the peptide pheromone cAD1. In Enterococcus faecalis (strain ATCC 700802 / V583), this protein is Probable protease eep (eep).